Reading from the N-terminus, the 312-residue chain is 2,3-dihydroxyphenylpropionate/2,3-dihydroxicinnamic acid 1,2-dioxygenase (312 aa).

Residue His-115 is the Proton donor of the active site. His-179 serves as the catalytic Proton acceptor.

The protein belongs to the LigB/MhpB extradiol dioxygenase family. As to quaternary structure, homotetramer. It depends on Fe(2+) as a cofactor.

The enzyme catalyses 3-(2,3-dihydroxyphenyl)propanoate + O2 = (2Z,4E)-2-hydroxy-6-oxonona-2,4-dienedioate + H(+). It carries out the reaction (2E)-3-(2,3-dihydroxyphenyl)prop-2-enoate + O2 = (2Z,4E,7E)-2-hydroxy-6-oxonona-2,4,7-trienedioate + H(+). It participates in aromatic compound metabolism; 3-phenylpropanoate degradation. Functionally, catalyzes the non-heme iron(II)-dependent oxidative cleavage of 2,3-dihydroxyphenylpropionic acid and 2,3-dihydroxicinnamic acid into 2-hydroxy-6-ketononadienedioate and 2-hydroxy-6-ketononatrienedioate, respectively. The sequence is that of 2,3-dihydroxyphenylpropionate/2,3-dihydroxicinnamic acid 1,2-dioxygenase from Mycolicibacterium paratuberculosis (strain ATCC BAA-968 / K-10) (Mycobacterium paratuberculosis).